A 329-amino-acid chain; its full sequence is Synaptonemal complex central element protein 1 (329 aa).

The tract at residues 1 to 33 (MATRPQPLSVEPEGSADLLHGPEGARGRRGSTQ) is disordered. 2 coiled-coil regions span residues 28–168 (RRGS…ETLM) and 194–294 (KEQL…ILAQ). The disordered stretch occupies residues 295 to 329 (IQSTQKEEDSSWRTASPKPLEAHKETVQERPSSRT). Residues 314-329 (LEAHKETVQERPSSRT) are compositionally biased toward basic and acidic residues.

Belongs to the SYCE family. As to quaternary structure, homodimer. Found in a complex with SYCP1 and SYCE2. Interacts with SYCP1, SYCE2 and SYCE3. Interacts with SIX6OS1.

The protein resides in the nucleus. It localises to the chromosome. Major component of the transverse central element of synaptonemal complexes (SCS), formed between homologous chromosomes during meiotic prophase. Requires SYCP1 in order to be incorporated into the central element. May have a role in the synaptonemal complex assembly, stabilization and recombination. The chain is Synaptonemal complex central element protein 1 (Syce1) from Rattus norvegicus (Rat).